The chain runs to 401 residues: MLTSFHSIKSRYTAPVRLRFFGELLTSLTGAMMGPFMVLYLHEQLNGSIMMPMLIISLQPFADIFLTLAAGRVTDRLGRRTAILTALLLQSAAMTGFVFAEHAYVFAILYVMNGIGRSLYIPASRAQIAESTPESRRSEVFAVINAIYSTGLTAGPLVGMLLYNHNPVWIFALDAAALFIYFLIAALKLPETKPLHPAVTPKMSASFTIYRPVLLLLLLSLPISMLYAQTETTYRLFSKNMFSDYLSMLTIYSAAKALFSCVLQVPLVKGTEKLSMKTILFITYICYSLAAAGFACSTSLTMLLVTAAVMTVGESIGLTHIQTFISKLAPPHLLGRFYAVYGLHWDISRSIGPLAGGLILTSFGGEVIFYALAVCLLTAGLSLTYTIEKLEHKVIRKVNRL.

10 helical membrane-spanning segments follow: residues 20-40 (FFGE…MVLY), 49-69 (IMMP…LTLA), 83-100 (ILTA…FVFA), 104-121 (YVFA…SLYI), 140-160 (VFAV…LVGM), 167-187 (PVWI…IAAL), 207-227 (FTIY…SMLY), 248-268 (MLTI…VPLV), 289-309 (LAAA…TAAV), and 357-377 (GLIL…VCLL).

Belongs to the major facilitator superfamily.

The protein localises to the cell membrane. This is an uncharacterized protein from Bacillus subtilis (strain 168).